Reading from the N-terminus, the 407-residue chain is Methyltransferase/ribosomally synthesized type I borosin cyclic peptide precursor ceuMA2 (407 aa).

The methyltransferase domain stretch occupies residues 1-246; sequence MATTKTGSLT…TTSTLYIPPR (246 aa). Active-site residues include Arg-70, Tyr-74, and Tyr-96. Residues Tyr-96, His-98, Val-101, Ala-128, Gln-170, Gly-208, Ser-239, and Thr-240 each coordinate S-adenosyl-L-methionine. Residues 247–370 form a clasp domain region; sequence EIAPVDQRIM…GPVYKVMRAT (124 aa). Positions 371–393 are precursor leader; the sequence is PAAIAAGQEHSLDEIAGSADSES. N-methylthreonine is present on residues Thr-399 and Thr-400. N-methylisoleucine is present on Ile-401. An N-methylvaline mark is found at Val-402 and Val-403. An N-methylisoleucine modification is found at Ile-404. Val-405 carries the N-methylvaline modification. Position 406 is an N-methylhistidine (His-406).

In the N-terminal section; belongs to the precorrin methyltransferase family. As to quaternary structure, homodimer. CeuMA2 automethylates at Thr-399, Thr-400, Ile-401, Val-402, Val-403, Ile-404, Val-405 and His-406 before being processed by a prolyloligopeptidase which likely forms a peptidyl ester upon removal of the follower propeptide, which then undergoes macrocyclization with the N-terminus of the modified core peptide. Peptide backbone alpha-N-methylations change the physicochemical properties of amide bonds to provide structural constraints and other favorable characteristics including biological membrane permeability to peptides.

It participates in secondary metabolite biosynthesis. Functionally, fusion protein of the methyltransferase ceuM2 and a type I borosin core peptide; part of the gene cluster that mediates the biosynthesis of a type I borosin, a highly methylated cyclic peptide with potent biological activities. Type I borosins derive from the C-terminus of the fusion protein, and it is the same protein that methylates its own C-terminus using S-adenosyl methionine (SAM). The C-terminus is subsequently cleaved off and macrocyclized by a prolyloligopeptidase to give the final product. This chain is Methyltransferase/ribosomally synthesized type I borosin cyclic peptide precursor ceuMA2, found in Cerrena unicolor (Canker rot fungus).